The following is a 223-amino-acid chain: Small ribosomal subunit protein uS3 (223 aa).

The 70-residue stretch at isoleucine 39–lysine 108 folds into the KH type-2 domain.

Belongs to the universal ribosomal protein uS3 family. As to quaternary structure, part of the 30S ribosomal subunit. Forms a tight complex with proteins S10 and S14.

Binds the lower part of the 30S subunit head. Binds mRNA in the 70S ribosome, positioning it for translation. The sequence is that of Small ribosomal subunit protein uS3 from Clostridium botulinum (strain Kyoto / Type A2).